Consider the following 206-residue polypeptide: Pyridoxine/pyridoxamine 5'-phosphate oxidase (206 aa).

Residues 53 to 58, 68 to 69, Lys75, and Gln97 each bind FMN; these read RMVLLK and YT. Lys58 is a substrate binding site. Substrate contacts are provided by Tyr115, Arg119, and Ser123. FMN-binding positions include 132-133 and Trp177; that span reads QS. Residue 183–185 participates in substrate binding; the sequence is RLH. Arg187 contacts FMN.

It belongs to the pyridoxamine 5'-phosphate oxidase family. As to quaternary structure, homodimer. FMN serves as cofactor.

It carries out the reaction pyridoxamine 5'-phosphate + O2 + H2O = pyridoxal 5'-phosphate + H2O2 + NH4(+). The catalysed reaction is pyridoxine 5'-phosphate + O2 = pyridoxal 5'-phosphate + H2O2. It functions in the pathway cofactor metabolism; pyridoxal 5'-phosphate salvage; pyridoxal 5'-phosphate from pyridoxamine 5'-phosphate: step 1/1. It participates in cofactor metabolism; pyridoxal 5'-phosphate salvage; pyridoxal 5'-phosphate from pyridoxine 5'-phosphate: step 1/1. Its function is as follows. Catalyzes the oxidation of either pyridoxine 5'-phosphate (PNP) or pyridoxamine 5'-phosphate (PMP) into pyridoxal 5'-phosphate (PLP). The sequence is that of Pyridoxine/pyridoxamine 5'-phosphate oxidase from Rhizobium leguminosarum bv. trifolii (strain WSM2304).